The sequence spans 424 residues: MASEKPHMNLVIIGHVDHGKSTLVGRLLFEHGEIPQHIIDEYKKEAEEKGKATFEFAWVMDRFKEERERGVTIDLTHRKFETDKYYFTIIDAPGHRDFVKNMITGTSQADAAVLVVSAREGEGVMAQTKEHAFLARTLGVPQLIAVVNKMDATQPPYSEKRFNEVKDEITKLLTPIGFKNVPIIPLSGYKGDNIMKPSPNLSWWKGPTLMEALNALQVPAKPVDKPLRLPVEDVYSITGIGTVPVGRIETGVMKVGDKVIFMPANKAGDVKSIEMHHEPMQQAGPGDNIGFNVRGIAKNELKRGDVCGPANNPPTVVKGFTAQIVVLNHPSVIAAGYKPVFHVHTAQVACRIDEIVKTINPKDGTTLKEKPDFIKTGDIAIVKVVPDRALVIEKVSEFPQLGRFAIRDMGMTVAAGQCIDLEKA.

The region spanning 5–223 (KPHMNLVIIG…NALQVPAKPV (219 aa)) is the tr-type G domain. The interval 14–21 (GHVDHGKS) is G1. 14–21 (GHVDHGKS) lines the GTP pocket. Residue Ser21 participates in Mg(2+) binding. Residues 70–74 (GVTID) form a G2 region. Residues 91–94 (DAPG) are G3. GTP is bound by residues 91–95 (DAPGH) and 148–151 (NKMD). The tract at residues 148 to 151 (NKMD) is G4. Residues 187–189 (SGY) form a G5 region.

It belongs to the TRAFAC class translation factor GTPase superfamily. Classic translation factor GTPase family. EF-Tu/EF-1A subfamily.

The protein localises to the cytoplasm. The enzyme catalyses GTP + H2O = GDP + phosphate + H(+). Its function is as follows. GTP hydrolase that promotes the GTP-dependent binding of aminoacyl-tRNA to the A-site of ribosomes during protein biosynthesis. This Picrophilus torridus (strain ATCC 700027 / DSM 9790 / JCM 10055 / NBRC 100828 / KAW 2/3) protein is Elongation factor 1-alpha.